Here is a 1734-residue protein sequence, read N- to C-terminus: Protein TIC 214 (1734 aa).

The next 6 membrane-spanning stretches (helical) occupy residues 19–39 (IINS…FSIG), 68–88 (FIAG…HLAL), 91–111 (PHTI…WNNH), 133–153 (VFLN…SSML), 176–196 (VGWL…LVWI), and 227–247 (IFSI…PSPI). Positions 1433 to 1485 (NLNNEEKELADEVELESDNEKQINPESALSNQEKTIQEIYAESKKKKRQNKKQ) form a coiled coil.

This sequence belongs to the TIC214 family. As to quaternary structure, part of the Tic complex.

It is found in the plastid. Its subcellular location is the chloroplast inner membrane. Involved in protein precursor import into chloroplasts. May be part of an intermediate translocation complex acting as a protein-conducting channel at the inner envelope. This is Protein TIC 214 from Lepidium virginicum (Virginia pepperweed).